Here is a 202-residue protein sequence, read N- to C-terminus: CASP-like protein 1E1 (202 aa).

Topologically, residues 1–33 (MESQCRPNVDGVHNGVESHVKVVEKPRSVGSSS) are cytoplasmic. The helical transmembrane segment at 34 to 54 (EFVLRILGLLLTLIAAVVAGV) threads the bilayer. Topologically, residues 55–85 (DKQTKIIPLTLIKTLPSLHVPVTAKWSDMSA) are extracellular. Residues 86-106 (FVYLVVSNAIACSYAAISLVL) traverse the membrane as a helical segment. Residues 107 to 118 (VTMLGRRGKGGR) are Cytoplasmic-facing. A helical membrane pass occupies residues 119 to 139 (VLAVIVLDLHMVGLLFSANGA). The Extracellular segment spans residues 140–172 (ATAVGVLGQYGNSHVEWKKVCNVFDSFCHHLVA). Residues 173–193 (SLALSFLGSLSFLGLVLLAIL) form a helical membrane-spanning segment. Topologically, residues 194–202 (NLHKKSSTK) are cytoplasmic.

Belongs to the Casparian strip membrane proteins (CASP) family. In terms of assembly, homodimer and heterodimers.

The protein localises to the cell membrane. In Vitis vinifera (Grape), this protein is CASP-like protein 1E1.